The sequence spans 533 residues: Peptide chain release factor 3 (533 aa).

The tr-type G domain occupies 10–278 (EKRRTFAIIS…TFVEIAPPPQ (269 aa)). GTP contacts are provided by residues 19–26 (SHPDAGKT), 87–91 (DTPGH), and 141–144 (NKMD).

It belongs to the TRAFAC class translation factor GTPase superfamily. Classic translation factor GTPase family. PrfC subfamily.

The protein localises to the cytoplasm. In terms of biological role, increases the formation of ribosomal termination complexes and stimulates activities of RF-1 and RF-2. It binds guanine nucleotides and has strong preference for UGA stop codons. It may interact directly with the ribosome. The stimulation of RF-1 and RF-2 is significantly reduced by GTP and GDP, but not by GMP. This Salinibacter ruber (strain DSM 13855 / M31) protein is Peptide chain release factor 3.